The following is a 156-amino-acid chain: Baculoviral IAP repeat-containing protein 5.2 (156 aa).

Residues 30–100 (RLSTFANWPF…KHSPSCLFIA (71 aa)) form a BIR repeat. Thr-46 is subject to Phosphothreonine; by CDK1. Cys-69, Cys-72, His-89, and Cys-96 together coordinate Zn(2+).

It belongs to the IAP family. In terms of assembly, component of the CPC at least composed of survivin/birc5, incenp, cdca8/borealin and/or cdca9/dasra-A, and aurkb/aurora-B. Interacts directly with incenp (via N-terminus). Interacts with rxra; the interaction is stronger in the absence of 9-cis retinoic acids. Ubiquitination is required for centrosome-targeting.

It is found in the cytoplasm. It localises to the nucleus. The protein resides in the chromosome. Its subcellular location is the centromere. The protein localises to the cytoskeleton. It is found in the spindle. In terms of biological role, component of the chromosomal passenger complex (CPC), a complex that acts as a key regulator of mitosis. The CPC complex has essential functions at the centromere in ensuring correct chromosome alignment and segregation and is required for chromatin-induced microtubule stabilization and spindle assembly. Does not appear to exhibit anti-apoptotic activity. Plays a role in increasing blood vessel size during development. The chain is Baculoviral IAP repeat-containing protein 5.2 (birc5.2) from Xenopus tropicalis (Western clawed frog).